Reading from the N-terminus, the 159-residue chain is RNA pyrophosphohydrolase (159 aa).

The region spanning 6–149 is the Nudix hydrolase domain; it reads GFRPNVGIIL…KREVYRRALK (144 aa). The Nudix box signature appears at 38–59; that stretch reads GGINPDETPEDALYRELNEEVG.

Belongs to the Nudix hydrolase family. RppH subfamily. A divalent metal cation is required as a cofactor.

Its function is as follows. Accelerates the degradation of transcripts by removing pyrophosphate from the 5'-end of triphosphorylated RNA, leading to a more labile monophosphorylated state that can stimulate subsequent ribonuclease cleavage. This Pseudomonas putida (strain ATCC 700007 / DSM 6899 / JCM 31910 / BCRC 17059 / LMG 24140 / F1) protein is RNA pyrophosphohydrolase.